A 508-amino-acid chain; its full sequence is Early growth response protein 1 (508 aa).

Disordered stretches follow at residues 18–78 and 136–210; these read PQFL…ESFS and MTNP…QYPP. Residues 33-42 show a composition bias toward low complexity; sequence NNSSSSSSSS. Residues 43-52 show a composition bias toward gly residues; it reads SGGGGGGGSN. Residues 139–164 show a composition bias toward low complexity; the sequence is PPTSSSSAPSPAASSSSSASQSPPLS. Residue Lys-278 forms a Glycyl lysine isopeptide (Lys-Gly) (interchain with G-Cter in SUMO2) linkage. The interval 292 to 311 is disordered; sequence SRMRKYPNRPSKTPPHERPY. 3 C2H2-type zinc fingers span residues 311-335, 341-363, and 369-391; these read YACP…IRIH, FQCR…IRTH, and FACD…TKIH. Residues 382 to 453 are disordered; it reads DERKRHTKIH…SSTYPSPAHS (72 aa). Residues 386-396 are compositionally biased toward basic residues; the sequence is RHTKIHLRQKD. Residues 402-450 show a composition bias toward low complexity; that stretch reads SVVASSAASSLSSYPSPVATSYPSPATTSFPSPVPTSYSSPGSSTYPSP. Repeat copies occupy residues 413–420, 421–428, 429–436, 437–444, 445–452, 453–460, and 462–468. The segment at 413 to 468 is 7 X 8 AA tandem repeats of [TS](2)-[FY]-[PS]-S-P-[GSAV]-X; that stretch reads SSYPSPVATSYPSPATTSFPSPVPTSYSSPGSSTYPSPAHSGFPSPSVATTYASVP.

The protein belongs to the EGR C2H2-type zinc-finger protein family. As to quaternary structure, interacts with SNAI1 and SP1 upon 12-O-tetradecanoylphorbol-13-acetate (TPA) induction. As to expression, detected in kidney thick ascending limbs and collecting ducts (at protein level).

It is found in the nucleus. It localises to the cytoplasm. Its function is as follows. Transcriptional regulator. Recognizes and binds to the DNA sequence 5'-GCG(T/G)GGGCG-3'(EGR-site) in the promoter region of target genes. Binds double-stranded target DNA, irrespective of the cytosine methylation status. Regulates the transcription of numerous target genes, and thereby plays an important role in regulating the response to growth factors, DNA damage, and ischemia. Plays a role in the regulation of cell survival, proliferation and cell death. Activates expression of p53/TP53 and TGFB1, and thereby helps prevent tumor formation. Required for normal progress through mitosis and normal proliferation of hepatocytes after partial hepatectomy. Mediates responses to ischemia and hypoxia; regulates the expression of proteins such as IL1B and CXCL2 that are involved in inflammatory processes and development of tissue damage after ischemia. Regulates biosynthesis of luteinizing hormone (LHB) in the pituitary. Regulates the amplitude of the expression rhythms of clock genes: BMAL1, PER2 and NR1D1 in the liver via the activation of PER1 (clock repressor) transcription. Regulates the rhythmic expression of core-clock gene BMAL1 in the suprachiasmatic nucleus (SCN). Regulates biosynthesis of glucocorticoid receptor GR/NR3C1 in the hippocampus and thereby may play a role in the behavioral and hypothalamic-pituitary-adrenal responses to stress in offspring. This chain is Early growth response protein 1 (Egr1), found in Rattus norvegicus (Rat).